Here is a 134-residue protein sequence, read N- to C-terminus: Large ribosomal subunit protein bL20 (134 aa).

It belongs to the bacterial ribosomal protein bL20 family.

Binds directly to 23S ribosomal RNA and is necessary for the in vitro assembly process of the 50S ribosomal subunit. It is not involved in the protein synthesizing functions of that subunit. This Rhizobium etli (strain CIAT 652) protein is Large ribosomal subunit protein bL20.